Here is a 585-residue protein sequence, read N- to C-terminus: MRRFSETYGQKKQITFFCSNLSITAVVIEGLLKHKEEYGALERGMDILAEAVSVTLGPKGRNVVLESGKYGPPQIVNDGVTIAKEIELEDHIENTGVALIRQAASKTNDVAGDGTTTATVLAHAMVKQGMKNVRCRSKSIAIKRGIEKATQFVISQIAEYSRPVEDTKSITQVAAISAGNDMEVGQMIADAIEKVGREGVISLEEGKSTVTELELTEGNGWFLKKGFISPYFVTDTDRMETTQENPYILLTDKKISLVQELVPIHLELISKTSRPLLIIAEDVEKEALATLVVNKLRGIVNVVAVRAPGFGDRRKTMLEDIAILTGGQVISEDAGFSLETVQLDMLGQARRITVVKEGTTIIAEGHEREVKARCEQIRRQIEASESSYEREKLQERLAKLAGGVAVIKVGAATETEKDKKLRLEDAINATKAAVEEGIVPGGATLIHFIEDLNDWAEDNLLDDELIGALIVEKALSAPMKRIIENTGISSSIIIEKIKDKDFSIGYNAAQGEIEDMYEIGVIDPAKVTRSAMQNAASIASMILTTECIVVDKKKTCSLETSIYWLVLTNKYFCLDLLRLYFFLKD.

ATP-binding positions include 55–58 (TLGP), 113–117 (DGTTT), Gly-442, 507–509 (NAA), and Asp-523.

The protein belongs to the chaperonin (HSP60) family. As to quaternary structure, forms a cylinder of 14 subunits composed of two heptameric rings stacked back-to-back. Interacts with the co-chaperonin GroES.

Its subcellular location is the plastid. It localises to the chloroplast. It carries out the reaction ATP + H2O + a folded polypeptide = ADP + phosphate + an unfolded polypeptide.. Its function is as follows. Together with its co-chaperonin GroES, plays an essential role in assisting protein folding. The GroEL-GroES system forms a nano-cage that allows encapsulation of the non-native substrate proteins and provides a physical environment optimized to promote and accelerate protein folding. The polypeptide is Chaperonin GroEL, chloroplastic (Pyrenomonas salina).